The chain runs to 86 residues: HssA/B-like protein 60 (86 aa).

Residues 11 to 33 (GNIKSSSKSNIASSSSSSSSQSL) form a disordered region.

The protein belongs to the hssA/B family.

The chain is HssA/B-like protein 60 (hssl60) from Dictyostelium discoideum (Social amoeba).